A 283-amino-acid chain; its full sequence is MRFVIPSKGRLKDATLELLERAGIRPSYLDSRALIVPSNKPNLDLVFARPEDIPWIVESGAAEVGITGHDYVLESGRDVAEILDLNYGRSKLVLAVPRDSGIKRPEELPKGFRIATKFINIATDYFEKKGLDVKIVKVSGSAEVMPGIGAADGIIDVMSTGTTLKLHGLTPIDVILSSSARLIVRKDLLDDPRVETIKLMLESVLRASKKKLVMMNVPDEALDDVLKVLPAMSGPTISKVKSEKPMWEVIAAVDEDEIADIIVKLKNAGAKDILVLNVERLIP.

It belongs to the ATP phosphoribosyltransferase family. Long subfamily. It depends on Mg(2+) as a cofactor.

The protein resides in the cytoplasm. The catalysed reaction is 1-(5-phospho-beta-D-ribosyl)-ATP + diphosphate = 5-phospho-alpha-D-ribose 1-diphosphate + ATP. Its pathway is amino-acid biosynthesis; L-histidine biosynthesis; L-histidine from 5-phospho-alpha-D-ribose 1-diphosphate: step 1/9. With respect to regulation, feedback inhibited by histidine. Catalyzes the condensation of ATP and 5-phosphoribose 1-diphosphate to form N'-(5'-phosphoribosyl)-ATP (PR-ATP). Has a crucial role in the pathway because the rate of histidine biosynthesis seems to be controlled primarily by regulation of HisG enzymatic activity. This Ignicoccus hospitalis (strain KIN4/I / DSM 18386 / JCM 14125) protein is ATP phosphoribosyltransferase.